The chain runs to 359 residues: 4-hydroxy-3-methylbut-2-en-1-yl diphosphate synthase (flavodoxin) (359 aa).

4 residues coordinate [4Fe-4S] cluster: cysteine 263, cysteine 266, cysteine 298, and glutamate 305.

It belongs to the IspG family. It depends on [4Fe-4S] cluster as a cofactor.

The catalysed reaction is (2E)-4-hydroxy-3-methylbut-2-enyl diphosphate + oxidized [flavodoxin] + H2O + 2 H(+) = 2-C-methyl-D-erythritol 2,4-cyclic diphosphate + reduced [flavodoxin]. It participates in isoprenoid biosynthesis; isopentenyl diphosphate biosynthesis via DXP pathway; isopentenyl diphosphate from 1-deoxy-D-xylulose 5-phosphate: step 5/6. Its function is as follows. Converts 2C-methyl-D-erythritol 2,4-cyclodiphosphate (ME-2,4cPP) into 1-hydroxy-2-methyl-2-(E)-butenyl 4-diphosphate. The polypeptide is 4-hydroxy-3-methylbut-2-en-1-yl diphosphate synthase (flavodoxin) (Wolinella succinogenes (strain ATCC 29543 / DSM 1740 / CCUG 13145 / JCM 31913 / LMG 7466 / NCTC 11488 / FDC 602W) (Vibrio succinogenes)).